A 368-amino-acid chain; its full sequence is Propane 2-monooxygenase, hydroxylase component small subunit (368 aa).

A compositionally biased stretch (basic and acidic residues) spans 1-17 (MSAPEKPRERSFPKIEF). Residues 1–32 (MSAPEKPRERSFPKIEFTDSEAGAKEFPSSKS) are disordered.

This sequence belongs to the TmoE/XamoE family. As to quaternary structure, the propane 2-monooxygenase multicomponent enzyme system is composed of an electron transfer component and a monooxygenase component interacting with the effector protein MimD. The electron transfer component is composed of a reductase (MimB), and the monooxygenase component is formed by a large subunit (MimA) and a small subunit (MimC). Requires the presence of the chaperonin-like protein MimG to ensure a productive folding, resulting of a soluble MimC, which leads to the active form of MimABCD.

It carries out the reaction propane + NADH + O2 + H(+) = propan-2-ol + NAD(+) + H2O. It catalyses the reaction acetone + NADH + O2 + H(+) = hydroxyacetone + NAD(+) + H2O. The enzyme catalyses butan-2-one + NADH + O2 + H(+) = 1-hydroxy-2-butanone + NAD(+) + H2O. The catalysed reaction is phenol + NADH + O2 + H(+) = hydroquinone + NAD(+) + H2O. Its function is as follows. Component of the propane 2-monooxygenase multicomponent enzyme system which is involved in the degradation of propane via the O2-dependent hydroxylation of propane. Also involved in the degradation of acetone via the O2-dependent hydroxylation of acetone. Also able to catalyze the oxidation of phenol, methylethylketone (2-butanone), 1-propanol and 2-propanol. The sequence is that of Propane 2-monooxygenase, hydroxylase component small subunit from Mycolicibacterium smegmatis (strain ATCC 700084 / mc(2)155) (Mycobacterium smegmatis).